The following is a 130-amino-acid chain: Small ribosomal subunit protein uS11 (130 aa).

It belongs to the universal ribosomal protein uS11 family. Part of the 30S ribosomal subunit. Interacts with proteins S7 and S18. Binds to IF-3.

Its function is as follows. Located on the platform of the 30S subunit, it bridges several disparate RNA helices of the 16S rRNA. Forms part of the Shine-Dalgarno cleft in the 70S ribosome. This Shewanella halifaxensis (strain HAW-EB4) protein is Small ribosomal subunit protein uS11.